The sequence spans 405 residues: Acetate kinase (405 aa).

Asparagine 7 contributes to the Mg(2+) binding site. Lysine 14 contacts ATP. Arginine 98 contributes to the substrate binding site. Aspartate 155 serves as the catalytic Proton donor/acceptor. Residues 215–219, 289–291, and 337–341 contribute to the ATP site; these read HLGNG, DMR, and GIGEN. Glutamate 391 contacts Mg(2+).

This sequence belongs to the acetokinase family. In terms of assembly, homodimer. Mg(2+) is required as a cofactor. The cofactor is Mn(2+).

Its subcellular location is the cytoplasm. It catalyses the reaction acetate + ATP = acetyl phosphate + ADP. It participates in metabolic intermediate biosynthesis; acetyl-CoA biosynthesis; acetyl-CoA from acetate: step 1/2. Functionally, catalyzes the formation of acetyl phosphate from acetate and ATP. Can also catalyze the reverse reaction. This is Acetate kinase from Desulfotalea psychrophila (strain LSv54 / DSM 12343).